A 156-amino-acid chain; its full sequence is Protein LlR18A (156 aa).

Residues N8 and D28 each contribute to the trans-zeatin site. Ca(2+)-binding residues include P32 and I38. Positions 54, 133, and 136 each coordinate trans-zeatin.

Belongs to the BetVI family. Expressed constitutively in roots.

The protein resides in the cytoplasm. Its subcellular location is the cytosol. Class II ribonuclease (RNase). Binds to cytokinins. Interacts with melatonin. The polypeptide is Protein LlR18A (LLR18A) (Lupinus luteus (European yellow lupine)).